A 238-amino-acid polypeptide reads, in one-letter code: MGRAFQNRKESMAKTSDQNAKVYSKYSREIYTCAKSGGVDPDGNLSLRSLLDRAKKDQVPSHVIQKAIDKAKGGGGEDFATARYEGFGPGNCMVIVDCLTDNPNRTYGDVRTCFNKAKAKIGSQGTVMHMFDHCAIFVFAGDDEEAILEALMMADVDVTDIECEDGKITVFTPHTEYGKAKTALAEVTNGAEFEVDEIQFVPQTQTAISGDDIEVFEKFLSMLDDLDDVQNVYHNAEY.

The protein belongs to the TACO1 family.

The protein resides in the cytoplasm. The sequence is that of Probable transcriptional regulatory protein Sde_1551 from Saccharophagus degradans (strain 2-40 / ATCC 43961 / DSM 17024).